Consider the following 101-residue polypeptide: Small ribosomal subunit protein bS18c (101 aa).

Belongs to the bacterial ribosomal protein bS18 family. Part of the 30S ribosomal subunit.

It localises to the plastid. The protein resides in the chloroplast. The chain is Small ribosomal subunit protein bS18c from Coffea arabica (Arabian coffee).